Consider the following 359-residue polypeptide: Mannose-1-phosphate guanylyltransferase (359 aa).

The protein belongs to the transferase hexapeptide repeat family.

It carries out the reaction alpha-D-mannose 1-phosphate + GTP + H(+) = GDP-alpha-D-mannose + diphosphate. It functions in the pathway cell wall biogenesis. It participates in nucleotide-sugar biosynthesis; GDP-alpha-D-mannose biosynthesis; GDP-alpha-D-mannose from alpha-D-mannose 1-phosphate (GTP route): step 1/1. Catalyzes the formation of GDP-mannose from D-mannose-1-phosphate and GTP. Plays an important role in the synthesis of different glycoconjugates which are responsible for cell wall structure, virulence and immunomodulatory activity of M.tuberculosis. In Mycobacterium tuberculosis (strain ATCC 25618 / H37Rv), this protein is Mannose-1-phosphate guanylyltransferase.